Reading from the N-terminus, the 307-residue chain is MAEYQNFFNQVQVAGAPEMGLKEDVDTFERTPAGMFNILGWMGNAQIGPIYLGIAGTVSLAFGAAWFFTIGVWYWYQAGFDPFIFMRDLFFFSLEPPPAEYGLAIAPLKQGGVWQIASLFMAISVIAWWVRVYTRADQLGMGKHMAWAFLSAIWLWSVLGFWRPILMGSWSVAPPYGIFSHLDWTNQFSLDHGNLFYNPFHGLSIAALYGSALLFAMHGATILAVTRFGGERELEQIVDRGTASERAALFWRWTMGFNATMEGIHRWAIWMAVMVTLTGGIGILLSGTVVDNWYVWAQVHGYAPVTP.

The next 3 membrane-spanning stretches (helical) occupy residues 52-78 (LGIA…WYQA), 110-139 (QGGV…ADQL), and 142-167 (GKHM…PILM). Residues histidine 181 and histidine 201 each coordinate (7R,8Z)-bacteriochlorophyll b. A helical membrane pass occupies residues 197–225 (YNPFHGLSIAALYGSALLFAMHGATILAV). 2 residues coordinate Fe cation: histidine 218 and glutamate 233. Tryptophan 251 is an a ubiquinone binding site. Residues 259 to 285 (ATMEGIHRWAIWMAVMVTLTGGIGILL) traverse the membrane as a helical segment. Residue histidine 265 participates in Fe cation binding.

It belongs to the reaction center PufL/M/PsbA/D family. As to quaternary structure, reaction center is composed of four bacteriochlorophylls, two bacteriopheophytins, two ubiquinones, one iron, and three highly hydrophobic polypeptide chains (designated L, M, and H).

It is found in the cellular chromatophore membrane. In terms of biological role, the reaction center is a membrane-bound complex that mediates the initial photochemical event in the electron transfer process of photosynthesis. The chain is Reaction center protein M chain (pufM) from Rhodobacter capsulatus (Rhodopseudomonas capsulata).